A 467-amino-acid chain; its full sequence is Microtubule-associated tyrosine carboxypeptidase 1 (467 aa).

Polar residues predominate over residues 1–10; that stretch reads MVLDSGTQVY. Disordered regions lie at residues 1–40 and 77–111; these read MVLDSGTQVYEQAPPRPPAGSPSQHHKLKPSNGNGPPLYP and MRRSESTYSVNSTGRRGRGKAPIGRGCDPGGTLRP. His276 lines the Zn(2+) pocket. Glu277 functions as the Nucleophile in the catalytic mechanism. Zn(2+) contacts are provided by His281 and Glu312.

This sequence belongs to the peptidase MATCAP family. The cofactor is Zn(2+).

It localises to the cytoplasm. It is found in the cytoskeleton. The catalysed reaction is C-terminal L-alpha-aminoacyl-L-glutamyl-L-glutamyl-L-tyrosyl-[tubulin] + H2O = C-terminal L-alpha-aminoacyl-L-glutamyl-L-glutamyl-[tubulin] + L-tyrosine. It catalyses the reaction C-terminal L-alpha-aminoacyl-L-glutamyl-L-glutamyl-L-phenylalanyl-[tubulin] + H2O = C-terminal L-alpha-aminoacyl-L-glutamyl-L-glutamyl-[tubulin] + L-phenylalanine. Tyrosine carboxypeptidase that removes the C-terminal tyrosine residue of alpha-tubulin, thereby regulating microtubule dynamics and function. Also able to remove the C-terminal phenylalanine residue of alpha-tubulin TUBA8. Recognizes adjacent tubulin dimers along the same protofilament. The sequence is that of Microtubule-associated tyrosine carboxypeptidase 1 from Mus musculus (Mouse).